Reading from the N-terminus, the 452-residue chain is Tripartite motif-containing protein 49D (452 aa).

An RING-type zinc finger spans residues 15–56; sequence CPICLNYFIDPVTIDCGHSFCRPCFYLNWQDIPILTQCFECL. A B box-type zinc finger spans residues 88 to 129; it reads SEEQMCGTHRETKKIFCEVDRSLLCLLCSSSLEHRYHRHCPA. 4 residues coordinate Zn(2+): cysteine 93, histidine 96, cysteine 115, and histidine 121. Residues 269–452 enclose the B30.2/SPRY domain; it reads ELRAGPITGL…LRPIFCCVHL (184 aa).

Belongs to the TRIM/RBCC family.

This Homo sapiens (Human) protein is Tripartite motif-containing protein 49D.